The chain runs to 249 residues: Phosphomannomutase 1 (249 aa).

Asp12 serves as the catalytic Nucleophile. Residues Asp12 and Asp14 each coordinate Mg(2+). Asp14 functions as the Proton donor/acceptor in the catalytic mechanism. Residues Arg21, Arg123, Arg134, Arg141, Ser179, and Asp181 each contribute to the alpha-D-mannose 1-phosphate site. 3 residues coordinate Mg(2+): Asp209, Asp223, and Thr227.

Belongs to the eukaryotic PMM family. Homodimer.

It localises to the cytoplasm. The enzyme catalyses alpha-D-mannose 1-phosphate = D-mannose 6-phosphate. It participates in nucleotide-sugar biosynthesis; GDP-alpha-D-mannose biosynthesis; alpha-D-mannose 1-phosphate from D-fructose 6-phosphate: step 2/2. Involved in the synthesis of the GDP-mannose and dolichol-phosphate-mannose required for a number of critical mannosyl transfer reactions. In Dictyostelium discoideum (Social amoeba), this protein is Phosphomannomutase 1 (pmmA).